The sequence spans 183 residues: Adenine phosphoribosyltransferase 3 (183 aa).

It belongs to the purine/pyrimidine phosphoribosyltransferase family. As to quaternary structure, homodimer.

Its subcellular location is the cytoplasm. The enzyme catalyses AMP + diphosphate = 5-phospho-alpha-D-ribose 1-diphosphate + adenine. The protein operates within purine metabolism; AMP biosynthesis via salvage pathway; AMP from adenine: step 1/1. Catalyzes a salvage reaction resulting in the formation of AMP, that is energically less costly than de novo synthesis. May contribute to the recycling of adenine into adenylate nucleotides and the inactivation of cytokinins by phosphoribosylation. Possesses low activity toward adenine and cytokinins. This Arabidopsis thaliana (Mouse-ear cress) protein is Adenine phosphoribosyltransferase 3 (APT3).